The chain runs to 145 residues: Transcriptional regulator MraZ (145 aa).

SpoVT-AbrB domains follow at residues Asn7–Leu54 and Gly83–Ala126.

It belongs to the MraZ family. Forms oligomers.

Its subcellular location is the cytoplasm. It is found in the nucleoid. The chain is Transcriptional regulator MraZ from Rhizobium leguminosarum bv. trifolii (strain WSM2304).